The primary structure comprises 129 residues: Glycine cleavage system H protein (129 aa).

The Lipoyl-binding domain maps to 24–106 (TFTVGISEHA…YGDGWLFRIK (83 aa)). K65 carries the post-translational modification N6-lipoyllysine.

This sequence belongs to the GcvH family. The glycine cleavage system is composed of four proteins: P, T, L and H. It depends on (R)-lipoate as a cofactor.

Functionally, the glycine cleavage system catalyzes the degradation of glycine. The H protein shuttles the methylamine group of glycine from the P protein to the T protein. The sequence is that of Glycine cleavage system H protein from Pseudoalteromonas atlantica (strain T6c / ATCC BAA-1087).